Consider the following 177-residue polypeptide: UPF0340 protein STH78 (177 aa).

It belongs to the UPF0340 family.

The protein is UPF0340 protein STH78 of Symbiobacterium thermophilum (strain DSM 24528 / JCM 14929 / IAM 14863 / T).